Here is a 244-residue protein sequence, read N- to C-terminus: Phosphoadenosine 5'-phosphosulfate reductase (244 aa).

Cysteine 239 acts as the Nucleophile; cysteine thiosulfonate intermediate in catalysis.

The protein belongs to the PAPS reductase family. CysH subfamily.

It localises to the cytoplasm. It catalyses the reaction [thioredoxin]-disulfide + sulfite + adenosine 3',5'-bisphosphate + 2 H(+) = [thioredoxin]-dithiol + 3'-phosphoadenylyl sulfate. Its pathway is sulfur metabolism; hydrogen sulfide biosynthesis; sulfite from sulfate: step 3/3. In terms of biological role, catalyzes the formation of sulfite from phosphoadenosine 5'-phosphosulfate (PAPS) using thioredoxin as an electron donor. The protein is Phosphoadenosine 5'-phosphosulfate reductase of Shigella dysenteriae serotype 1 (strain Sd197).